A 318-amino-acid chain; its full sequence is MAVNPQGVAAVLADLKGRDFLSCADFTAEQTVALLELSRQLKSGDRRIDLGNRVLGLIFTKASTRTRVSFQVAMARLGGQTVDLNPQVTQLGRGEPLEDTARVLSRFCDVMAVRTFAQQELLDYAHWASIPVLNALTDLEHPCQAMADFLTIQEALGSLTGQTLAYVGDGNNVSHSLMLCGALLGVNVRIGCPQGFEPLPEVIDQARNLAVADARIEVMTDPVDAVRGAQALYTDVWASMGQEQEQSQREEAFRGFCLNEDLLAHADPNAIVLHCLPAHRGEEISSGVMEGEASRIFDQAENRLHVQQALLAAVLGGL.

Carbamoyl phosphate-binding positions include 63-66 (STRT), Gln90, Arg114, and 141-144 (HPCQ). Residues Asn172, Asp235, and 239-240 (SM) contribute to the L-ornithine site. Carbamoyl phosphate is bound by residues 275 to 276 (CL) and Arg303.

Belongs to the aspartate/ornithine carbamoyltransferase superfamily. OTCase family.

The protein localises to the cytoplasm. The enzyme catalyses carbamoyl phosphate + L-ornithine = L-citrulline + phosphate + H(+). Its pathway is amino-acid biosynthesis; L-arginine biosynthesis; L-arginine from L-ornithine and carbamoyl phosphate: step 1/3. Its function is as follows. Reversibly catalyzes the transfer of the carbamoyl group from carbamoyl phosphate (CP) to the N(epsilon) atom of ornithine (ORN) to produce L-citrulline. In Prochlorococcus marinus (strain MIT 9313), this protein is Ornithine carbamoyltransferase.